The sequence spans 648 residues: Biosynthetic arginine decarboxylase (648 aa).

Lysine 109 carries the post-translational modification N6-(pyridoxal phosphate)lysine. 291–301 (IDVGGGLGIDF) contributes to the substrate binding site.

It belongs to the Orn/Lys/Arg decarboxylase class-II family. SpeA subfamily. Mg(2+) serves as cofactor. Pyridoxal 5'-phosphate is required as a cofactor.

It carries out the reaction L-arginine + H(+) = agmatine + CO2. Catalyzes the biosynthesis of agmatine from arginine. The chain is Biosynthetic arginine decarboxylase from Prochlorococcus marinus subsp. pastoris (strain CCMP1986 / NIES-2087 / MED4).